Reading from the N-terminus, the 474-residue chain is Aromatic amino acid aminotransferase C56E4.03 (474 aa).

This sequence belongs to the class-I pyridoxal-phosphate-dependent aminotransferase family. Pyridoxal 5'-phosphate serves as cofactor.

The protein localises to the cytoplasm. The catalysed reaction is an aromatic L-alpha-amino acid + 2-oxoglutarate = an aromatic oxo-acid + L-glutamate. In terms of biological role, has aromatic amino acid transaminase activity. In Schizosaccharomyces pombe (strain 972 / ATCC 24843) (Fission yeast), this protein is Aromatic amino acid aminotransferase C56E4.03.